Reading from the N-terminus, the 644-residue chain is Exoribonuclease 2 (644 aa).

Residues 189 to 516 form the RNB domain; sequence REDLTALDFV…NHRLLKAVIK (328 aa). Residues 561 to 643 form the S1 motif domain; it reads DTRFAAEIVD…ETRSIIARPV (83 aa).

The protein belongs to the RNR ribonuclease family. RNase II subfamily.

It is found in the cytoplasm. It catalyses the reaction Exonucleolytic cleavage in the 3'- to 5'-direction to yield nucleoside 5'-phosphates.. Its function is as follows. Involved in mRNA degradation. Hydrolyzes single-stranded polyribonucleotides processively in the 3' to 5' direction. This Shigella dysenteriae serotype 1 (strain Sd197) protein is Exoribonuclease 2.